A 148-amino-acid polypeptide reads, in one-letter code: Large ribosomal subunit protein bL9 (148 aa).

The protein belongs to the bacterial ribosomal protein bL9 family.

Binds to the 23S rRNA. The protein is Large ribosomal subunit protein bL9 of Macrococcus caseolyticus (strain JCSC5402) (Macrococcoides caseolyticum).